The following is a 196-amino-acid chain: Imidazoleglycerol-phosphate dehydratase (196 aa).

Belongs to the imidazoleglycerol-phosphate dehydratase family.

The protein resides in the cytoplasm. It catalyses the reaction D-erythro-1-(imidazol-4-yl)glycerol 3-phosphate = 3-(imidazol-4-yl)-2-oxopropyl phosphate + H2O. It functions in the pathway amino-acid biosynthesis; L-histidine biosynthesis; L-histidine from 5-phospho-alpha-D-ribose 1-diphosphate: step 6/9. The protein is Imidazoleglycerol-phosphate dehydratase of Dehalococcoides mccartyi (strain CBDB1).